The following is a 684-amino-acid chain: MDTSKKDTTRSPSHSNSSSPSSSSLSSSSSKEKKRPKRLSSQNVNYDLKRRKIITSEGIERSFKNEHSNLAVEDNIPEEEPKELLEKDSKGNIIKLNEPSTISEDSKVSVTGLPLNKGPSEKIKRESLWNYRKNLGGQSNNSEMTLVPSKRFTQVPKNFQDLNRNDLKTFLTENMTEESNIRSTIGWNGDIINRTRDREPESDRDNKKLSNIRTKIILSTNATYDSKSKLFGQNSIKSTSNASEKIFRDKNNSTIDFENEDFCSACNQSGSFLCCDTCPKSFHFLCLDPPIDPNNLPKGDWHCNECKFKIFINNSMATLKKIESNFIKQNNNVKIFAKLLFNIDSHNPKQFQLPNYIKETFPAVKTGSRGQYSDENDKIPLTDRQLFNTSYGQSITKLDSYNPDTHIDSNSGKFLICYKCNQTRLGSWSHPENSRLIMTCDYCQTPWHLDCVPRASFKNLGSKWKCPLHSPTKVYKKIHHCQEDNSVNYKVWKKQRLINKKNQLYYEPLQKIGYQNNGNIQIIPTTSHTDYDFNQDFKITQIDENSIKYDFFDKIYKSKMVQKRKLFQFQESLIDKLVSNGSQNGNSEDNMVKDIASLIYFQVSNNDKSSNNKSASKSNNLRKLWDLKELTNVVVPNELDSIQFNDFSSDEIKHLLYLKKIIESKPKEELLKFLNIENPENQSE.

N-acetylmethionine is present on M1. A disordered region spans residues 1–48; that stretch reads MDTSKKDTTRSPSHSNSSSPSSSSLSSSSSKEKKRPKRLSSQNVNYDL. A compositionally biased stretch (low complexity) spans 10 to 29; it reads RSPSHSNSSSPSSSSLSSSS. S68 is subject to Phosphoserine. The segment at 260-309 adopts a PHD-type 1 zinc-finger fold; the sequence is EDFCSACNQSGSFLCCDTCPKSFHFLCLDPPIDPNNLPKGDWHCNECKFK. A PHD-type 2; atypical zinc finger spans residues 414–472; the sequence is FLICYKCNQTRLGSWSHPENSRLIMTCDYCQTPWHLDCVPRASFKNLGSKWKCPLHSPT. A Phosphoserine modification is found at S683.

As to quaternary structure, component of the RPD3C(S) complex composed of at least EAF3, RCO1, RPD3, SIN3, and UME1.

The protein resides in the nucleus. Its function is as follows. Catalytic component of the RPD3C(S) histone deacetylase complex responsible for the deacetylation of lysine residues on the N-terminal part of the core histones (H2A, H2B, H3 and H4). Histone deacetylation gives a tag for epigenetic repression and plays an important role in transcriptional regulation, cell cycle progression, DNA damage response, osmotic stress response and developmental events. The chain is Transcriptional regulatory protein RCO1 (RCO1) from Saccharomyces cerevisiae (strain ATCC 204508 / S288c) (Baker's yeast).